The chain runs to 423 residues: Glutamate-1-semialdehyde 2,1-aminomutase (423 aa).

At Lys262 the chain carries N6-(pyridoxal phosphate)lysine.

Belongs to the class-III pyridoxal-phosphate-dependent aminotransferase family. HemL subfamily. Requires pyridoxal 5'-phosphate as cofactor.

The protein localises to the cytoplasm. The enzyme catalyses (S)-4-amino-5-oxopentanoate = 5-aminolevulinate. Its pathway is porphyrin-containing compound metabolism; protoporphyrin-IX biosynthesis; 5-aminolevulinate from L-glutamyl-tRNA(Glu): step 2/2. This Methanosphaera stadtmanae (strain ATCC 43021 / DSM 3091 / JCM 11832 / MCB-3) protein is Glutamate-1-semialdehyde 2,1-aminomutase.